Here is a 290-residue protein sequence, read N- to C-terminus: Signal recognition particle receptor subunit beta (290 aa).

Residues 44–64 form a helical membrane-spanning segment; sequence VLLLALFTLIFIIIISKLFGS. Residues 92–100, 114–117, Gly-140, and Ala-268 contribute to the GTP site; these read GLSNAGKTA and THTS.

This sequence belongs to the SRP receptor beta subunit family. Heterodimer of an alpha and a beta chain.

The protein localises to the endoplasmic reticulum membrane. Functionally, component of the signal recognition particle (SRP) complex receptor (SR). Ensures, in conjunction with the SRP complex, the correct targeting of the nascent secretory proteins to the endoplasmic reticulum membrane system. May mediate the membrane association of SR. The polypeptide is Signal recognition particle receptor subunit beta (srprb) (Dictyostelium discoideum (Social amoeba)).